Here is a 248-residue protein sequence, read N- to C-terminus: 5'-nucleotidase SurE (248 aa).

A divalent metal cation-binding residues include Asp8, Asp9, Ser39, and Asn91.

The protein belongs to the SurE nucleotidase family. It depends on a divalent metal cation as a cofactor.

The protein resides in the cytoplasm. The enzyme catalyses a ribonucleoside 5'-phosphate + H2O = a ribonucleoside + phosphate. In terms of biological role, nucleotidase that shows phosphatase activity on nucleoside 5'-monophosphates. The chain is 5'-nucleotidase SurE from Marinomonas sp. (strain MWYL1).